The primary structure comprises 198 residues: Recombination protein RecR (198 aa).

A C4-type zinc finger spans residues 57 to 72 (CEKCNTFTEAQICEVC). Residues 80-175 (TLLCVVETPA…AVTRLARGVP (96 aa)) enclose the Toprim domain.

Belongs to the RecR family.

In terms of biological role, may play a role in DNA repair. It seems to be involved in an RecBC-independent recombinational process of DNA repair. It may act with RecF and RecO. This chain is Recombination protein RecR, found in Burkholderia ambifaria (strain MC40-6).